The following is a 391-amino-acid chain: Serine protease 7 (391 aa).

A signal peptide spans M1–A27. A propeptide spans Q28–K136 (activation peptide). Positions S30–C84 constitute a Clip domain. 3 cysteine pairs are disulfide-bonded: C31–C83, C41–C72, and C47–C84. A disordered region spans residues G91 to L121. 5 disulfide bridges follow: C128/C264, C167/C183, C211/C216, C310/C327, and C337/C366. Residues V137–R390 enclose the Peptidase S1 domain. Residue N141 is glycosylated (N-linked (GlcNAc...) asparagine). Catalysis depends on H182, which acts as the Charge relay system. Positions 202, 204, 207, and 210 each coordinate Ca(2+). D244 (charge relay system) is an active-site residue. The Charge relay system role is filled by S341.

It belongs to the peptidase S1 family. CLIP subfamily. Interacts with Spn27A.

Its subcellular location is the secreted. Its function is as follows. Serine protease that, by cleaving and activating prophenoloxidase (PPO1) after immune challenge, plays an essential role in the melanization immune response to septic wounding. May function in diverse Hayan-dependent PPO1-activating cascades that are negatively controlled by different serpin proteins; Spn27A in the hemolymph and Spn77BA in the trachea. Important for the innate immune response to fungi. Regulation of melanization and PPO1 activation appears to be largely independent of the Toll signaling pathway. This is Serine protease 7 from Drosophila melanogaster (Fruit fly).